The following is a 335-amino-acid chain: UPF0104 membrane protein PH1989 (335 aa).

Transmembrane regions (helical) follow at residues 4-24 (YLLIIIGVTLVLILLWWAGIE), 34-54 (DIRFILLAILMYCISVLIWAV), 62-82 (GANINVSFVKVIEGVFIGIFL), 122-142 (ILDVIPVVVFMMLAFLYALTI), 148-168 (LIILGISAIILVIILLMTTVF), 231-251 (LYSFILWGADILKTYFIFLSL), 266-286 (ASIAVAMISVIPGGIGITEVV), and 304-324 (VTMLDRLISFWIPTLLGGILV).

Belongs to the UPF0104 family.

It is found in the cell membrane. This is UPF0104 membrane protein PH1989 from Pyrococcus horikoshii (strain ATCC 700860 / DSM 12428 / JCM 9974 / NBRC 100139 / OT-3).